We begin with the raw amino-acid sequence, 155 residues long: Lipoprotein signal peptidase (155 aa).

A run of 4 helical transmembrane segments spans residues W7 to V27, I39 to F59, V63 to F83, and G96 to V116. Active-site residues include D117 and D133. Residues F126 to S146 form a helical membrane-spanning segment.

This sequence belongs to the peptidase A8 family.

The protein resides in the cell inner membrane. It catalyses the reaction Release of signal peptides from bacterial membrane prolipoproteins. Hydrolyzes -Xaa-Yaa-Zaa-|-(S,diacylglyceryl)Cys-, in which Xaa is hydrophobic (preferably Leu), and Yaa (Ala or Ser) and Zaa (Gly or Ala) have small, neutral side chains.. The protein operates within protein modification; lipoprotein biosynthesis (signal peptide cleavage). In terms of biological role, this protein specifically catalyzes the removal of signal peptides from prolipoproteins. The chain is Lipoprotein signal peptidase from Microcystis aeruginosa (strain NIES-843 / IAM M-2473).